Consider the following 277-residue polypeptide: E3 ubiquitin-protein ligase CCNB1IP1 (277 aa).

The RING-type; atypical zinc finger occupies 4-51 (CEDMLLCNYRKCRIKLSGYAWVTACSHIFCDQHGSGEFSRSPAICPAC). Positions 127 to 182 (QQIQSKDVELTSMKGEVTSMKKVLEEYKKKFSDISEKLMERNRQYQKLQGLYDSLR) form a coiled coil.

In terms of assembly, interacts with CCNB1, UBE2L3 and NF2. Ubiquitinated; autoubiquitinated. Post-translationally, phosphorylated by CDK1 on serine or threonine residues (in vitro). As to expression, highly expressed in heart. Detected at intermediate levels in liver and kidney, and at low levels in placenta, brain and lung.

It localises to the nucleus. The protein resides in the chromosome. The enzyme catalyses S-ubiquitinyl-[E2 ubiquitin-conjugating enzyme]-L-cysteine + [acceptor protein]-L-lysine = [E2 ubiquitin-conjugating enzyme]-L-cysteine + N(6)-ubiquitinyl-[acceptor protein]-L-lysine.. Its pathway is protein modification; protein ubiquitination. Its function is as follows. Ubiquitin E3 ligase that acts as a limiting factor for crossing-over during meiosis: required during zygonema to limit the colocalization of RNF212 with MutS-gamma-associated recombination sites and thereby establish early differentiation of crossover and non-crossover sites. Later, it is directed by MutL-gamma to stably accumulate at designated crossover sites. Probably promotes the dissociation of RNF212 and MutS-gamma to allow the progression of recombination and the implementation of the final steps of crossing over. Modulates cyclin-B levels and participates in the regulation of cell cycle progression through the G2 phase. Overexpression causes delayed entry into mitosis. The sequence is that of E3 ubiquitin-protein ligase CCNB1IP1 (CCNB1IP1) from Homo sapiens (Human).